We begin with the raw amino-acid sequence, 619 residues long: Nucleolar GTP-binding protein 2 (619 aa).

Positions M1–R10 are enriched in basic and acidic residues. The interval M1–K24 is disordered. In terms of domain architecture, CP-type G spans W222–P383. GTP-binding positions include G332–S339 and D376–I380. Residues P473–K619 form a disordered region. A compositionally biased stretch (basic and acidic residues) spans M489–S500. Acidic residues predominate over residues S536–A546. Residues E547 to A556 show a composition bias toward basic and acidic residues. Acidic residues predominate over residues S565–A603.

It belongs to the TRAFAC class YlqF/YawG GTPase family. NOG2 subfamily.

It is found in the nucleus. The protein localises to the nucleolus. GTPase that associates with pre-60S ribosomal subunits in the nucleolus and is required for their nuclear export and maturation. The sequence is that of Nucleolar GTP-binding protein 2 (nog-2) from Neurospora crassa (strain ATCC 24698 / 74-OR23-1A / CBS 708.71 / DSM 1257 / FGSC 987).